The sequence spans 152 residues: Large ribosomal subunit protein uL15 (152 aa).

Residues 18 to 37 are disordered; the sequence is RVARGIGSGKGKTAGRGVKG. The segment covering 23–35 has biased composition (gly residues); sequence IGSGKGKTAGRGV.

Belongs to the universal ribosomal protein uL15 family. In terms of assembly, part of the 50S ribosomal subunit.

Its function is as follows. Binds to the 23S rRNA. The polypeptide is Large ribosomal subunit protein uL15 (Rickettsia bellii (strain OSU 85-389)).